The sequence spans 1126 residues: Protein translocase subunit SecA (1126 aa).

ATP is bound by residues Gln175, 193-197, and Asp694; that span reads GEGKT. Residues 1060 to 1126 are disordered; it reads VQEAAPEKHE…KYKNCHGQGL (67 aa). A compositionally biased stretch (basic and acidic residues) spans 1064–1080; the sequence is APEKHEDMSRYRTEKTD. Zn(2+) is bound by residues Cys1110, Cys1112, Cys1121, and His1122.

Belongs to the SecA family. As to quaternary structure, monomer and homodimer. Part of the essential Sec protein translocation apparatus which comprises SecA, SecYEG and auxiliary proteins SecDF. Other proteins may also be involved. Zn(2+) is required as a cofactor.

It is found in the cell inner membrane. The protein resides in the cytoplasm. It catalyses the reaction ATP + H2O + cellular proteinSide 1 = ADP + phosphate + cellular proteinSide 2.. Part of the Sec protein translocase complex. Interacts with the SecYEG preprotein conducting channel. Has a central role in coupling the hydrolysis of ATP to the transfer of proteins into and across the cell membrane, serving as an ATP-driven molecular motor driving the stepwise translocation of polypeptide chains across the membrane. The polypeptide is Protein translocase subunit SecA (Parabacteroides distasonis (strain ATCC 8503 / DSM 20701 / CIP 104284 / JCM 5825 / NCTC 11152)).